The sequence spans 105 residues: MPTLTQQKIRIRLKAYDHRLLDTSCDKIVDTARRTDAVPVGPIPLPTRRRIYCVLRSPHIDKDSREHFETRTHRRIIDIYSPSSKTIDALMKLDLPAGVDIEVKL.

This sequence belongs to the universal ribosomal protein uS10 family. In terms of assembly, part of the 30S ribosomal subunit.

Functionally, involved in the binding of tRNA to the ribosomes. The polypeptide is Small ribosomal subunit protein uS10 (Synechococcus sp. (strain JA-2-3B'a(2-13)) (Cyanobacteria bacterium Yellowstone B-Prime)).